The primary structure comprises 190 residues: Guanylate kinase (190 aa).

One can recognise a Guanylate kinase-like domain in the interval 7–186 (GKLIVFSAPS…AVDDVEAAIV (180 aa)). Position 14–21 (14–21 (APSGAGKT)) interacts with ATP.

The protein belongs to the guanylate kinase family.

Its subcellular location is the cytoplasm. The enzyme catalyses GMP + ATP = GDP + ADP. In terms of biological role, essential for recycling GMP and indirectly, cGMP. This chain is Guanylate kinase, found in Chlorobium chlorochromatii (strain CaD3).